Reading from the N-terminus, the 597-residue chain is Elongation factor 4 (597 aa).

In terms of domain architecture, tr-type G spans 2-184; that stretch reads KHIRNFSIIA…TIVKSIPAPE (183 aa). Residues 14–19 and 131–134 each bind GTP; these read DHGKST and NKID.

Belongs to the TRAFAC class translation factor GTPase superfamily. Classic translation factor GTPase family. LepA subfamily.

Its subcellular location is the cell inner membrane. The catalysed reaction is GTP + H2O = GDP + phosphate + H(+). Required for accurate and efficient protein synthesis under certain stress conditions. May act as a fidelity factor of the translation reaction, by catalyzing a one-codon backward translocation of tRNAs on improperly translocated ribosomes. Back-translocation proceeds from a post-translocation (POST) complex to a pre-translocation (PRE) complex, thus giving elongation factor G a second chance to translocate the tRNAs correctly. Binds to ribosomes in a GTP-dependent manner. In Aliivibrio fischeri (strain MJ11) (Vibrio fischeri), this protein is Elongation factor 4.